The following is a 226-amino-acid chain: PKHD-type hydroxylase AZC_3753 (226 aa).

Residues 78–178 (RILPPMFNRY…RVASFFWTQS (101 aa)) form the Fe2OG dioxygenase domain. Residues His96, Asp98, and His159 each contribute to the Fe cation site. Arg169 lines the 2-oxoglutarate pocket.

Requires Fe(2+) as cofactor. L-ascorbate is required as a cofactor.

This is PKHD-type hydroxylase AZC_3753 from Azorhizobium caulinodans (strain ATCC 43989 / DSM 5975 / JCM 20966 / LMG 6465 / NBRC 14845 / NCIMB 13405 / ORS 571).